The sequence spans 226 residues: Large ribosomal subunit protein uL1 (226 aa).

This sequence belongs to the universal ribosomal protein uL1 family. As to quaternary structure, part of the 50S ribosomal subunit.

Functionally, binds directly to 23S rRNA. The L1 stalk is quite mobile in the ribosome, and is involved in E site tRNA release. Protein L1 is also a translational repressor protein, it controls the translation of the L11 operon by binding to its mRNA. This Selenomonas ruminantium protein is Large ribosomal subunit protein uL1.